A 174-amino-acid chain; its full sequence is Shikimate kinase 2 (174 aa).

12–17 (GCGKTT) contacts ATP. Thr16 and Asp32 together coordinate Mg(2+). Substrate contacts are provided by Asp34, Arg58, and Gly79. The interval 112-126 (QAAPEEDLRPTLTGK) is LID domain. Arg120 lines the ATP pocket. Arg139 is a binding site for substrate.

The protein belongs to the shikimate kinase family. AroL subfamily. As to quaternary structure, monomer. Mg(2+) is required as a cofactor.

The protein resides in the cytoplasm. The enzyme catalyses shikimate + ATP = 3-phosphoshikimate + ADP + H(+). It functions in the pathway metabolic intermediate biosynthesis; chorismate biosynthesis; chorismate from D-erythrose 4-phosphate and phosphoenolpyruvate: step 5/7. Functionally, catalyzes the specific phosphorylation of the 3-hydroxyl group of shikimic acid using ATP as a cosubstrate. The polypeptide is Shikimate kinase 2 (Escherichia coli O7:K1 (strain IAI39 / ExPEC)).